An 82-amino-acid chain; its full sequence is Small ribosomal subunit protein bS16 (82 aa).

Belongs to the bacterial ribosomal protein bS16 family.

The chain is Small ribosomal subunit protein bS16 from Bdellovibrio bacteriovorus (strain ATCC 15356 / DSM 50701 / NCIMB 9529 / HD100).